We begin with the raw amino-acid sequence, 152 residues long: Proteolipid protein 2 (152 aa).

The 119-residue stretch at 19–137 (FSRTRKGFLL…DAYITFPLRQ (119 aa)) folds into the MARVEL domain. A run of 3 helical transmembrane segments spans residues 25-45 (GFLL…FSTS), 48-68 (GYSF…VVYM), and 85-105 (FFRT…VLVE). Residue Asn-108 is glycosylated (N-linked (GlcNAc...) asparagine). The chain crosses the membrane as a helical span at residues 112–132 (IAAGALGLCAAGLFGYDAYIT).

Its subcellular location is the membrane. In terms of biological role, may play a role in cell differentiation in the intestinal epithelium. This Bos taurus (Bovine) protein is Proteolipid protein 2 (PLP2).